A 461-amino-acid chain; its full sequence is Hydroxyproline dehydrogenase (461 aa).

The residue at position 310 (Lys-310) is an N6-acetyllysine.

Belongs to the proline oxidase family. Requires FAD as cofactor.

The catalysed reaction is trans-4-hydroxy-L-proline + a quinone = (3R,5S)-1-pyrroline-3-hydroxy-5-carboxylate + a quinol + H(+). It carries out the reaction L-proline + a quinone = (S)-1-pyrroline-5-carboxylate + a quinol + H(+). Its pathway is amino-acid degradation; L-proline degradation into L-glutamate; L-glutamate from L-proline: step 1/2. In terms of biological role, dehydrogenase that converts trans-4-L-hydroxyproline to delta-1-pyrroline-3-hydroxy-5-carboxylate (Hyp) using ubiquinone-10 as the terminal electron acceptor. Can also use proline as a substrate but with a very much lower efficiency. Does not react with other diastereomers of Hyp: trans-4-D-hydroxyproline and cis-4-L-hydroxyproline. Ubiquininone analogs such as menadione, duroquinone and ubiquinone-1 react more efficiently than oxygen as the terminal electron acceptor during catalysis. The chain is Hydroxyproline dehydrogenase from Bos taurus (Bovine).